Here is a 444-residue protein sequence, read N- to C-terminus: Argininosuccinate synthase (444 aa).

Residues 18–26 (AFSGGLDTS) and A44 each bind ATP. Y100 contributes to the L-citrulline binding site. The ATP site is built by G130 and T132. T132, N136, and D137 together coordinate L-aspartate. N136 provides a ligand contact to L-citrulline. ATP is bound at residue D137. Residues R140 and S193 each coordinate L-citrulline. Residue D195 coordinates ATP. L-citrulline-binding residues include T202, E204, and E281.

It belongs to the argininosuccinate synthase family. Type 2 subfamily. As to quaternary structure, homotetramer.

It is found in the cytoplasm. It carries out the reaction L-citrulline + L-aspartate + ATP = 2-(N(omega)-L-arginino)succinate + AMP + diphosphate + H(+). The protein operates within amino-acid biosynthesis; L-arginine biosynthesis; L-arginine from L-ornithine and carbamoyl phosphate: step 2/3. This Haemophilus influenzae (strain PittGG) protein is Argininosuccinate synthase.